The sequence spans 654 residues: RNA polymerase I-specific transcription initiation factor tif-1A (654 aa).

Positions 1-37 are disordered; sequence MKRSTANAPKLSPKHESESDPKKVKLEEEAKPTVNQA. Residues 13-31 are compositionally biased toward basic and acidic residues; it reads PKHESESDPKKVKLEEEAK.

The protein belongs to the RRN3 family.

It is found in the nucleus. Its subcellular location is the nucleolus. In terms of biological role, required for efficient transcription initiation by RNA polymerase I (Pol I). In Caenorhabditis elegans, this protein is RNA polymerase I-specific transcription initiation factor tif-1A.